Reading from the N-terminus, the 180-residue chain is ATP synthase subunit delta (180 aa).

It belongs to the ATPase delta chain family. As to quaternary structure, F-type ATPases have 2 components, F(1) - the catalytic core - and F(0) - the membrane proton channel. F(1) has five subunits: alpha(3), beta(3), gamma(1), delta(1), epsilon(1). F(0) has three main subunits: a(1), b(2) and c(10-14). The alpha and beta chains form an alternating ring which encloses part of the gamma chain. F(1) is attached to F(0) by a central stalk formed by the gamma and epsilon chains, while a peripheral stalk is formed by the delta and b chains.

It localises to the cell membrane. In terms of biological role, f(1)F(0) ATP synthase produces ATP from ADP in the presence of a proton or sodium gradient. F-type ATPases consist of two structural domains, F(1) containing the extramembraneous catalytic core and F(0) containing the membrane proton channel, linked together by a central stalk and a peripheral stalk. During catalysis, ATP synthesis in the catalytic domain of F(1) is coupled via a rotary mechanism of the central stalk subunits to proton translocation. Functionally, this protein is part of the stalk that links CF(0) to CF(1). It either transmits conformational changes from CF(0) to CF(1) or is implicated in proton conduction. The protein is ATP synthase subunit delta of Dehalococcoides mccartyi (strain ATCC BAA-2266 / KCTC 15142 / 195) (Dehalococcoides ethenogenes (strain 195)).